The sequence spans 330 residues: 1-aminocyclopropane-1-carboxylate oxidase 2 (330 aa).

One can recognise a Fe2OG dioxygenase domain in the interval Pro-153–Pro-253. Residues His-177, Asp-179, and His-234 each contribute to the Fe cation site.

The protein belongs to the iron/ascorbate-dependent oxidoreductase family. In terms of assembly, monomer. The cofactor is Fe cation.

It carries out the reaction 1-aminocyclopropane-1-carboxylate + L-ascorbate + O2 = ethene + L-dehydroascorbate + hydrogen cyanide + CO2 + 2 H2O. Its pathway is alkene biosynthesis; ethylene biosynthesis via S-adenosyl-L-methionine; ethylene from S-adenosyl-L-methionine: step 2/2. This Malus domestica (Apple) protein is 1-aminocyclopropane-1-carboxylate oxidase 2 (ACO2).